The following is a 269-amino-acid chain: MDCYAEELVVPNYQESSSETYPSTGMWGGWSMSSPEAAEKCFDYDGFNGEGMMYSQMSMRTSEEEEESKRSKAFYGASSLHDFEGIEQMDDMFLSSILEDVPEDDGDVHRATSSNNSVGSSSMYGGGREVPMFHCHDMSFKEEAPFTISDLSEENMLDSNYGDELSSEEFVLQDLQRASQKLTDETRKCFRDTFYRLARSSQDKSDSVSPNSEELLMQTSRYDYGDGNRFSREEEIESETNSIDRAVANLTFNKMESNISNFPLSERVQ.

As to quaternary structure, interacts with REV8.

Functionally, probable transcriptional coactivator. The chain is Protein LNK3 from Arabidopsis thaliana (Mouse-ear cress).